The primary structure comprises 300 residues: NAD kinase (300 aa).

Asp-75 (proton acceptor) is an active-site residue. NAD(+)-binding positions include 75–76 (DG), 149–150 (ND), Arg-177, Asp-179, 190–195 (TAYALS), Ala-214, and Gln-248.

It belongs to the NAD kinase family. Requires a divalent metal cation as cofactor.

Its subcellular location is the cytoplasm. The catalysed reaction is NAD(+) + ATP = ADP + NADP(+) + H(+). In terms of biological role, involved in the regulation of the intracellular balance of NAD and NADP, and is a key enzyme in the biosynthesis of NADP. Catalyzes specifically the phosphorylation on 2'-hydroxyl of the adenosine moiety of NAD to yield NADP. This is NAD kinase from Burkholderia mallei (strain SAVP1).